The chain runs to 251 residues: Haloacid dehalogenase-like hydrolase domain-containing protein 3 (251 aa).

An N6-acetyllysine; alternate modification is found at lysine 15. At lysine 15 the chain carries N6-succinyllysine; alternate. N6-acetyllysine is present on lysine 130.

It belongs to the HAD-like hydrolase superfamily.

In Bos taurus (Bovine), this protein is Haloacid dehalogenase-like hydrolase domain-containing protein 3 (HDHD3).